The sequence spans 144 residues: Large ribosomal subunit protein uL16 (144 aa).

It belongs to the universal ribosomal protein uL16 family. Part of the 50S ribosomal subunit.

In terms of biological role, binds 23S rRNA and is also seen to make contacts with the A and possibly P site tRNAs. The chain is Large ribosomal subunit protein uL16 from Bacillus licheniformis (strain ATCC 14580 / DSM 13 / JCM 2505 / CCUG 7422 / NBRC 12200 / NCIMB 9375 / NCTC 10341 / NRRL NRS-1264 / Gibson 46).